The primary structure comprises 363 residues: tRNA/tmRNA (uracil-C(5))-methyltransferase (363 aa).

Gln187, Tyr215, Asn220, Glu236, and Asp296 together coordinate S-adenosyl-L-methionine. Cys321 acts as the Nucleophile in catalysis. Glu355 serves as the catalytic Proton acceptor.

Belongs to the class I-like SAM-binding methyltransferase superfamily. RNA M5U methyltransferase family. TrmA subfamily.

It carries out the reaction uridine(54) in tRNA + S-adenosyl-L-methionine = 5-methyluridine(54) in tRNA + S-adenosyl-L-homocysteine + H(+). It catalyses the reaction uridine(341) in tmRNA + S-adenosyl-L-methionine = 5-methyluridine(341) in tmRNA + S-adenosyl-L-homocysteine + H(+). In terms of biological role, dual-specificity methyltransferase that catalyzes the formation of 5-methyluridine at position 54 (m5U54) in all tRNAs, and that of position 341 (m5U341) in tmRNA (transfer-mRNA). This Pseudomonas aeruginosa (strain UCBPP-PA14) protein is tRNA/tmRNA (uracil-C(5))-methyltransferase.